Here is a 159-residue protein sequence, read N- to C-terminus: Nudix hydrolase DR_1025 (159 aa).

Mg(2+) is bound by residues methionine 1, arginine 14, and serine 49. 1 to 6 (MEHDER) lines the ATP pocket. Residues 11 to 144 (VELRAAGVVL…QIRMYQTKLF (134 aa)) enclose the Nudix hydrolase domain. 50–51 (GA) contacts ATP. The Nudix box signature appears at 50-71 (GAVEDGENPQDAAVREACEETG). 2 residues coordinate Mg(2+): glutamate 53 and glutamate 65. ATP is bound at residue 87–89 (FPD). Arginine 95 lines the Mg(2+) pocket.

Belongs to the Nudix hydrolase family. Homodimer. Mg(2+) is required as a cofactor.

The enzyme catalyses 8-oxo-dGTP + H2O = 8-oxo-dGDP + phosphate + H(+). The catalysed reaction is 8-oxo-GTP + H2O = 8-oxo-GDP + phosphate + H(+). It carries out the reaction P(1),P(4)-bis(5'-adenosyl) tetraphosphate + H2O = AMP + ATP + 2 H(+). In terms of biological role, hydrolase that can act as a nucleoside triphosphatase and a dinucleoside polyphosphate pyrophosphatase. The best substrates are 8-oxo-dGTP and 8-oxo-GTP. Other substrates include Ap4A, dGTP and GTP. May be involved in protection from damage caused by radiation. This chain is Nudix hydrolase DR_1025, found in Deinococcus radiodurans (strain ATCC 13939 / DSM 20539 / JCM 16871 / CCUG 27074 / LMG 4051 / NBRC 15346 / NCIMB 9279 / VKM B-1422 / R1).